Here is a 534-residue protein sequence, read N- to C-terminus: Glucan endo-1,3-beta-glucosidase 12 (534 aa).

Residues 1-24 (MGQRLNLVFWIFVSILAFLNFGMA) form the signal peptide. E120 serves as the catalytic Proton donor. N127 carries N-linked (GlcNAc...) asparagine glycosylation. Catalysis depends on E264, which acts as the Nucleophile. Residues N336, N357, and N375 are each glycosylated (N-linked (GlcNAc...) asparagine). A disordered region spans residues 348-379 (ENTTPVSPTNSTTGTSPSPSSSPIINGNSTVT). Positions 349 to 377 (NTTPVSPTNSTTGTSPSPSSSPIINGNST) are enriched in low complexity. C392 and C455 are joined by a disulfide. N-linked (GlcNAc...) asparagine glycans are attached at residues N485, N491, and N495. Residue S507 is the site of GPI-anchor amidated serine attachment. A propeptide spans 508-534 (STNEAFRQMVVAVSVLLPCFVVCSSIW) (removed in mature form).

It belongs to the glycosyl hydrolase 17 family. Post-translationally, contains two additional disulfide bonds.

Its subcellular location is the secreted. It localises to the cell wall. The protein resides in the cell membrane. The enzyme catalyses Hydrolysis of (1-&gt;3)-beta-D-glucosidic linkages in (1-&gt;3)-beta-D-glucans.. The polypeptide is Glucan endo-1,3-beta-glucosidase 12 (Arabidopsis thaliana (Mouse-ear cress)).